The following is a 344-amino-acid chain: DNA-directed RNA polymerase subunit alpha (344 aa).

The alpha N-terminal domain (alpha-NTD) stretch occupies residues 1 to 238 (MKVIKTAPLI…KQLGVFGERP (238 aa)). The segment at 253–344 (DAKDLSAKIE…EKLEDKGGND (92 aa)) is alpha C-terminal domain (alpha-CTD).

It belongs to the RNA polymerase alpha chain family. Homodimer. The RNAP catalytic core consists of 2 alpha, 1 beta, 1 beta' and 1 omega subunit. When a sigma factor is associated with the core the holoenzyme is formed, which can initiate transcription.

The catalysed reaction is RNA(n) + a ribonucleoside 5'-triphosphate = RNA(n+1) + diphosphate. Functionally, DNA-dependent RNA polymerase catalyzes the transcription of DNA into RNA using the four ribonucleoside triphosphates as substrates. This chain is DNA-directed RNA polymerase subunit alpha, found in Helicobacter pylori (strain HPAG1).